A 620-amino-acid polypeptide reads, in one-letter code: MDNKISPEAQVAELELDAVIGFNGHVPTGLKCHPDQEHMIYPLGCTVLIQAINTKEQNFLQGHGNNVSCLAISRSGEYIASGQVTFMGFKADIILWDYKNRELLARLSLHKGKIEALAFSPNDLYLVSLGGPDDGSVVVWSIAKRDAICGSPAAGLNVGNATNVIFSRCRDEMFMTAGNGTIRVWELDLPNRKIWPTECQTGQLKRIVMSIGVDDDDSFFYLGTTTGDILKMNPRTKLLTDVGPAKDKFSLGVSAIRCLKMGGLLVGSGAGLLVFCKSPGYKPIKKIQLQGGITSITLRGEGHQFLVGTEESHIYRVSFTDFKETLIATCHFDAVEDIVFPFGTAELFATCAKKDIRVWHTSSNRELLRITVPNMTCHGIDFMRDGKSIISAWNDGKIRAFAPETGRLMYVINNAHRIGVTAIATTSDCKRVISGGGEGEVRVWQIGCQTQKLEEALKEHKSSVSCIRVKRNNEECVTASTDGTCIIWDLVRLRRNQMILANTLFQCVCYHPEEFQIITSGTDRKIAYWEVFDGTVIRELEGSLSGSINGMDITQEGVHFVTGGNDHLVKVWDYNEGEVTHVGVGHSGNITRIRISPGNQYIVSVSADGAILRWKYPYTS.

WD repeat units follow at residues 62 to 106, 109 to 150, 156 to 195, 288 to 327, 330 to 369, 372 to 411, 415 to 454, 459 to 498, 500 to 539, 543 to 582, and 585 to 620; these read GHGN…LLAR, LHKG…AICG, LNVGNATNVIFSRCRDEMFMTAGNGTIRVWELDLPNRKIW, QLQGGITSITLRGEGHQFLVGTEESHIYRVSFTDFKETLI, CHFDAVEDIVFPFGTAELFATCAKKDIRVWHTSSNRELLR, VPNMTCHGIDFMRDGKSIISAWNDGKIRAFAPETGRLMYV, AHRIGVTAIATTSDCKRVISGGGEGEVRVWQIGCQTQKLE, EHKSSVSCIRVKRNNEECVTASTDGTCIIWDLVRLRRNQM, LANTLFQCVCYHPEEFQIITSGTDRKIAYWEVFDGTVIRE, SLSGSINGMDITQEGVHFVTGGNDHLVKVWDYNEGEVTHV, and GHSGNITRIRISPGNQYIVSVSADGAILRWKYPYTS.

It belongs to the CFAP52 family. As to quaternary structure, microtubule inner protein component of sperm flagellar doublet microtubules. Interacts with BRCA2. Interacts with the CCT chaperonin complex. Interacts with HSP70. Interacts with AK8. Interacts with CFAP45. Interacts with DNAI1. Interacts with IQDC. Expressed in respiratory cells and sperm (at protein level). Highly expressed in testis. Up-regulated in hepatocellular carcinoma (HCC).

It is found in the cytoplasm. The protein localises to the cytoskeleton. Its subcellular location is the cilium axoneme. The protein resides in the flagellum axoneme. Functionally, microtubule inner protein (MIP) part of the dynein-decorated doublet microtubules (DMTs) in cilia axoneme. Important for proper ciliary and flagellar beating. May act in cooperation with CFAP45 and axonemal dynein subunit DNAH11. May play a role in cell growth and/or survival. This is Cilia- and flagella-associated protein 52 from Homo sapiens (Human).